The chain runs to 167 residues: Photosystem I assembly protein Ycf3 (167 aa).

3 TPR repeats span residues 35 to 68, 72 to 105, and 120 to 153; these read AFSY…ETDA, SYIL…NPSL, and GEQA…APTN.

Belongs to the Ycf3 family.

The protein resides in the plastid. The protein localises to the chloroplast thylakoid membrane. Functionally, essential for the assembly of the photosystem I (PSI) complex. May act as a chaperone-like factor to guide the assembly of the PSI subunits. This chain is Photosystem I assembly protein Ycf3, found in Chlorella vulgaris (Green alga).